A 390-amino-acid chain; its full sequence is 8-amino-7-oxononanoate synthase (390 aa).

Arg-19 is a binding site for substrate. 106–107 (GY) contributes to the pyridoxal 5'-phosphate binding site. Residue His-131 participates in substrate binding. Residues Ser-176, His-204, and Thr-233 each contribute to the pyridoxal 5'-phosphate site. Lys-236 bears the N6-(pyridoxal phosphate)lysine mark. Thr-350 contributes to the substrate binding site.

This sequence belongs to the class-II pyridoxal-phosphate-dependent aminotransferase family. BioF subfamily. In terms of assembly, homodimer. The cofactor is pyridoxal 5'-phosphate.

It catalyses the reaction 6-carboxyhexanoyl-[ACP] + L-alanine + H(+) = (8S)-8-amino-7-oxononanoate + holo-[ACP] + CO2. It participates in cofactor biosynthesis; biotin biosynthesis. Its function is as follows. Catalyzes the decarboxylative condensation of pimeloyl-[acyl-carrier protein] and L-alanine to produce 8-amino-7-oxononanoate (AON), [acyl-carrier protein], and carbon dioxide. The chain is 8-amino-7-oxononanoate synthase from Pseudomonas putida (strain ATCC 700007 / DSM 6899 / JCM 31910 / BCRC 17059 / LMG 24140 / F1).